Reading from the N-terminus, the 189-residue chain is GTPase KRas (189 aa).

Residue Met1 is modified to N-acetylmethionine; in GTPase KRas; alternate. At Thr2 the chain carries N-acetylthreonine; in GTPase KRas, N-terminally processed. GTP contacts are provided by residues 10–18 (GAGGVGKSA), 29–35 (VDEYDPT), and 59–60 (AG). The Effector region signature appears at 32–40 (YDPTIEDSY). Thr35 carries (Microbial infection) O-linked (Glc) threonine; by P.sordellii toxin TcsL glycosylation. Lys104 is modified (N6-acetyllysine). A GTP-binding site is contributed by 116-119 (NKCD). Residues 166 to 185 (YRLKKISKEEKTPGCVKIKK) are hypervariable region. A Glycyl lysine isopeptide (Lys-Gly) (interchain with G-Cter in ubiquitin) cross-link involves residue Lys170. Cys180 carries the S-palmitoyl cysteine lipid modification. 3 N6-palmitoyl lysine lipidation sites follow: Lys182, Lys184, and Lys185. Cys186 carries the cysteine methyl ester modification. Cys186 is lipidated: S-farnesyl cysteine. Positions 187–189 (IIM) are cleaved as a propeptide — removed in mature form.

It belongs to the small GTPase superfamily. Ras family. In terms of assembly, interacts with PHLPP. Interacts (active GTP-bound form preferentially) with RGS14. Interacts (when farnesylated) with PDE6D; this promotes dissociation from the cell membrane. Interacts with SOS1. Interacts (when farnesylated) with GPR31. Interacts with RAP1GDS1. Interacts (active GTP-bound form) with both SHOC2 and PP1c (all isoforms) to form a tertiary complex; SHOC2 and PP1c preferably bind M-Ras/MRAS, but they also bind K-Ras/KRAS, N-Ras/NRAS and H-Ras/HRAS. Interacts (GTP-bound form) with MAPKAP1/SIN1; inhibiting K-Ras/KRAS activity. As to quaternary structure, interacts with GPR31; in a farnelysation-dependent manner. Acetylation at Lys-104 prevents interaction with guanine nucleotide exchange factors (GEFs). Post-translationally, palmitoylated at Lys-182, Lys-184 and Lys-185. Palmitoylation on lysine residues is promoted by palmitoylation at Cys-180. Lysine-depalmitoylation by SIRT2 promotes its localization to endomembranes in endocytic pathways. In terms of processing, ubiquitinated by the BCR(LZTR1) E3 ubiquitin ligase complex at Lys-170 in a non-degradative manner, leading to inhibit Ras signaling by decreasing Ras association with membranes. (Microbial infection) Glucosylated at Thr-35 by P.sordellii toxin TcsL.

It localises to the cell membrane. The protein localises to the endomembrane system. Its subcellular location is the cytoplasm. It is found in the cytosol. It carries out the reaction GTP + H2O = GDP + phosphate + H(+). Alternates between an inactive form bound to GDP and an active form bound to GTP. Activated by a guanine nucleotide-exchange factor (GEF) and inactivated by a GTPase-activating protein (GAP). Interaction with SOS1 promotes exchange of bound GDP to GTP. Functionally, ras proteins bind GDP/GTP and possess intrinsic GTPase activity. Plays an important role in the regulation of cell proliferation. Plays a role in promoting oncogenic events by inducing transcriptional silencing of tumor suppressor genes (TSGs) in colorectal cancer (CRC) cells in a ZNF304-dependent manner. The sequence is that of GTPase KRas (KRAS) from Homo sapiens (Human).